The primary structure comprises 223 residues: Deoxyribose-phosphate aldolase (223 aa).

The active-site Proton donor/acceptor is aspartate 91. Residue lysine 153 is the Schiff-base intermediate with acetaldehyde of the active site. Lysine 182 (proton donor/acceptor) is an active-site residue.

Belongs to the DeoC/FbaB aldolase family. DeoC type 1 subfamily.

It localises to the cytoplasm. The catalysed reaction is 2-deoxy-D-ribose 5-phosphate = D-glyceraldehyde 3-phosphate + acetaldehyde. It functions in the pathway carbohydrate degradation; 2-deoxy-D-ribose 1-phosphate degradation; D-glyceraldehyde 3-phosphate and acetaldehyde from 2-deoxy-alpha-D-ribose 1-phosphate: step 2/2. Catalyzes a reversible aldol reaction between acetaldehyde and D-glyceraldehyde 3-phosphate to generate 2-deoxy-D-ribose 5-phosphate. The polypeptide is Deoxyribose-phosphate aldolase (Streptococcus agalactiae serotype V (strain ATCC BAA-611 / 2603 V/R)).